A 221-amino-acid chain; its full sequence is Large ribosomal subunit protein uL1 (221 aa).

Belongs to the universal ribosomal protein uL1 family. In terms of assembly, part of the 50S ribosomal subunit.

Its function is as follows. Probably involved in E site tRNA release. Binds directly to 23S rRNA. In terms of biological role, protein L1 is also a translational repressor protein, it controls the translation of its operon by binding to its mRNA. In Sulfolobus acidocaldarius (strain ATCC 33909 / DSM 639 / JCM 8929 / NBRC 15157 / NCIMB 11770), this protein is Large ribosomal subunit protein uL1.